The sequence spans 569 residues: Oxygen-dependent choline dehydrogenase (569 aa).

FAD is bound at residue 9-38; it reads DYVIIGGGSAGSVLGNRLSEDKDKEVLVLE. H475 acts as the Proton acceptor in catalysis.

This sequence belongs to the GMC oxidoreductase family. The cofactor is FAD.

The catalysed reaction is choline + A = betaine aldehyde + AH2. The enzyme catalyses betaine aldehyde + NAD(+) + H2O = glycine betaine + NADH + 2 H(+). Its pathway is amine and polyamine biosynthesis; betaine biosynthesis via choline pathway; betaine aldehyde from choline (cytochrome c reductase route): step 1/1. Functionally, involved in the biosynthesis of the osmoprotectant glycine betaine. Catalyzes the oxidation of choline to betaine aldehyde and betaine aldehyde to glycine betaine at the same rate. In Staphylococcus aureus (strain COL), this protein is Oxygen-dependent choline dehydrogenase.